The sequence spans 221 residues: Probable septum site-determining protein MinC (221 aa).

Belongs to the MinC family. As to quaternary structure, interacts with MinD and FtsZ.

Cell division inhibitor that blocks the formation of polar Z ring septums. Rapidly oscillates between the poles of the cell to destabilize FtsZ filaments that have formed before they mature into polar Z rings. Prevents FtsZ polymerization. The protein is Probable septum site-determining protein MinC of Aliivibrio fischeri (strain ATCC 700601 / ES114) (Vibrio fischeri).